Here is a 195-residue protein sequence, read N- to C-terminus: Interferon omega-1 (195 aa).

Positions 1 to 21 form a signal peptide, or 23 in some molecules; it reads MALLFPLLAALVMTSYSPVGS. Intrachain disulfides connect cysteine 24-cysteine 122 and cysteine 52-cysteine 162. Asparagine 101 carries an N-linked (GlcNAc...) asparagine glycan.

This sequence belongs to the alpha/beta interferon family.

Its subcellular location is the secreted. The protein is Interferon omega-1 (IFNW1) of Homo sapiens (Human).